Consider the following 702-residue polypeptide: Elongation factor G (702 aa).

One can recognise a tr-type G domain in the interval serine 8 to threonine 290. Residues alanine 17–threonine 24, aspartate 88–histidine 92, and asparagine 142–aspartate 145 each bind GTP.

It belongs to the TRAFAC class translation factor GTPase superfamily. Classic translation factor GTPase family. EF-G/EF-2 subfamily.

The protein resides in the cytoplasm. Its function is as follows. Catalyzes the GTP-dependent ribosomal translocation step during translation elongation. During this step, the ribosome changes from the pre-translocational (PRE) to the post-translocational (POST) state as the newly formed A-site-bound peptidyl-tRNA and P-site-bound deacylated tRNA move to the P and E sites, respectively. Catalyzes the coordinated movement of the two tRNA molecules, the mRNA and conformational changes in the ribosome. The chain is Elongation factor G from Edwardsiella ictaluri (strain 93-146).